The following is a 784-amino-acid chain: Cas scaffolding protein family member 4 (784 aa).

Positions 11-73 (PKALLARALY…PANRLQILEE (63 aa)) constitute an SH3 domain. Residues Ser-197, Ser-246, Ser-302, Ser-373, and Ser-387 each carry the phosphoserine modification. The tract at residues 343-376 (TPNIYDVPRAMPDVPQAGKELGKAGGPSENSVDH) is disordered. Residues 466–536 (RDSLEANIDA…LLETKERLES (71 aa)) adopt a coiled-coil conformation. The segment at 614–635 (KEGESYQRKAPFQKQRASEQPP) is disordered.

This sequence belongs to the CAS family. As to quaternary structure, interacts (via SH3 domain) with PTK2/FAK1 (via C-terminus). Post-translationally, phosphorylated on tyrosines by SRC.

The protein localises to the cytoplasm. It localises to the cytoskeleton. The protein resides in the cell junction. Its subcellular location is the focal adhesion. Functionally, docking protein that plays a role in tyrosine kinase-based signaling related to cell adhesion and cell spreading. Regulates PTK2/FAK1 activity, focal adhesion integrity, and cell spreading. The sequence is that of Cas scaffolding protein family member 4 from Sus scrofa (Pig).